Consider the following 233-residue polypeptide: 7-cyano-7-deazaguanine synthase (233 aa).

ATP is bound at residue 7–17 (CSGGLDSVSLA). Residues Cys185, Cys193, Cys196, and Cys199 each coordinate Zn(2+).

Belongs to the QueC family. Zn(2+) serves as cofactor.

It catalyses the reaction 7-carboxy-7-deazaguanine + NH4(+) + ATP = 7-cyano-7-deazaguanine + ADP + phosphate + H2O + H(+). Its pathway is purine metabolism; 7-cyano-7-deazaguanine biosynthesis. Its function is as follows. Catalyzes the ATP-dependent conversion of 7-carboxy-7-deazaguanine (CDG) to 7-cyano-7-deazaguanine (preQ(0)). The chain is 7-cyano-7-deazaguanine synthase from Ruegeria sp. (strain TM1040) (Silicibacter sp.).